A 294-amino-acid polypeptide reads, in one-letter code: MKKTLLAASAVVALSASFTAGAAETEKPQYLSDWWHQSVNVVGSYHTRFGPQIRNDTYLEYEAFAKKDWFDFYGYIDAPVFFGGNSTAKGIWNKGSPLFMEIEPRFSIDKLTNTDLSFGPFKEWYFANNYIYDMGRNDSQEQSTWYMGLGTDIDTGLPMSLSLNIYAKYQWQNYGASNENEWDGYRFKVKYFVPLTDLWGGSLSYIGFTNFDWGSDLGDDNFYDMNGKHARTSNSIASSHILALNYAHWHYSIVARYFHNGGQWADDAKLNFGDGDFSVRSTGWGGYFVVGYNF.

Residues M1–A22 form the signal peptide.

Belongs to the nucleoside-specific channel-forming outer membrane porin (Tsx) (TC 1.B.10) family.

Its subcellular location is the cell outer membrane. In terms of biological role, functions as a substrate-specific channel for nucleosides and deoxynucleosides. Also functions in albicidin uptake and as receptor for colicin K. Also is a receptor for several Tsx-specific bacteriophages. The chain is Nucleoside-specific channel-forming protein Tsx from Klebsiella aerogenes (strain ATCC 13048 / DSM 30053 / CCUG 1429 / JCM 1235 / KCTC 2190 / NBRC 13534 / NCIMB 10102 / NCTC 10006 / CDC 819-56) (Enterobacter aerogenes).